The sequence spans 387 residues: Decapping nuclease RAI1 (387 aa).

An a divalent metal cation-binding site is contributed by E172. A Phosphoserine modification is found at S198. E221 provides a ligand contact to substrate. Residues D223, E241, and L242 each coordinate a divalent metal cation. Substrate is bound by residues K243 and Q267. Positions I273 to K387 are interaction with RAT1.

Belongs to the DXO/Dom3Z family. As to quaternary structure, interacts with RAT1, RTT103 and pre-60S ribosomal subunits. Interacts with RAT1; the interaction is direct, stabilizes RAT1 protein structure and stimulates its exoribonuclease activity. The interaction also stimulates RAI1 pyrophosphohydrolase activity, probably by recruiting it to mRNA substrates. It depends on a divalent metal cation as a cofactor.

The protein localises to the nucleus. The enzyme catalyses a 5'-end NAD(+)-phospho-ribonucleoside in mRNA + H2O = a 5'-end phospho-ribonucleoside in mRNA + NAD(+) + H(+). The catalysed reaction is a 5'-end (N(7)-methyl 5'-triphosphoguanosine)-ribonucleoside-ribonucleotide in mRNA + H2O = a (N(7)-methyl 5'-triphosphoguanosine)-nucleoside + a 5'-end phospho-ribonucleoside in mRNA + H(+). It carries out the reaction a 5'-end triphospho-ribonucleoside in mRNA + H2O = a 5'-end phospho-ribonucleoside in mRNA + diphosphate + H(+). In terms of biological role, decapping enzyme for NAD-capped RNAs: specifically hydrolyzes the nicotinamide adenine dinucleotide (NAD) cap from a subset of RNAs by removing the entire NAD moiety from the 5'-end of an NAD-capped RNA. The NAD-cap is present at the 5'-end of some RNAs and snoRNAs. In contrast to the canonical 5'-end N7 methylguanosine (m7G) cap, the NAD cap promotes mRNA decay. Also acts as a non-canonical decapping enzyme that removes the entire cap structure of m7G capped or incompletely capped RNAs. Has decapping activity toward incomplete 5'-end m7G cap mRNAs such as unmethylated 5'-end-capped RNA (cap0), while it has no activity toward 2'-O-ribose methylated m7G cap (cap1). Also possesses RNA 5'-pyrophosphohydrolase activity by hydrolyzing the 5'-end triphosphate to release pyrophosphates. Stimulates exoribonuclease activity of RAT1, allowing it to degrade RNAs with stable secondary structure more effectively. Required for the processing of nuclear mRNA and rRNA precursors. May promote termination of transcription by RNA polymerase II. In Saccharomyces cerevisiae (strain ATCC 204508 / S288c) (Baker's yeast), this protein is Decapping nuclease RAI1.